A 134-amino-acid polypeptide reads, in one-letter code: Mediator of RNA polymerase II transcription subunit 10 (134 aa).

It belongs to the Mediator complex subunit 10 family. Component of the Mediator complex.

It localises to the nucleus. Its function is as follows. Component of the Mediator complex, a coactivator involved in the regulated transcription of nearly all RNA polymerase II-dependent genes. Mediator functions as a bridge to convey information from gene-specific regulatory proteins to the basal RNA polymerase II transcription machinery. Mediator is recruited to promoters by direct interactions with regulatory proteins and serves as a scaffold for the assembly of a functional preinitiation complex with RNA polymerase II and the general transcription factors. Negatively regulates the Wnt signaling pathway and positively regulates the Nodal signaling pathway. Required for cardiac cushion formation. This Danio rerio (Zebrafish) protein is Mediator of RNA polymerase II transcription subunit 10 (med10).